The chain runs to 137 residues: Nucleoside diphosphate kinase (137 aa).

K9, F57, R85, T91, R102, and N112 together coordinate ATP. H115 acts as the Pros-phosphohistidine intermediate in catalysis.

Belongs to the NDK family. In terms of assembly, homotetramer. It depends on Mg(2+) as a cofactor.

It localises to the cytoplasm. The enzyme catalyses a 2'-deoxyribonucleoside 5'-diphosphate + ATP = a 2'-deoxyribonucleoside 5'-triphosphate + ADP. The catalysed reaction is a ribonucleoside 5'-diphosphate + ATP = a ribonucleoside 5'-triphosphate + ADP. In terms of biological role, major role in the synthesis of nucleoside triphosphates other than ATP. The ATP gamma phosphate is transferred to the NDP beta phosphate via a ping-pong mechanism, using a phosphorylated active-site intermediate. The polypeptide is Nucleoside diphosphate kinase (Campylobacter curvus (strain 525.92)).